Consider the following 655-residue polypeptide: WD repeat-containing protein 70 (655 aa).

Disordered regions lie at residues 1–24 (MEHSGPSEVTGADTAGPDPQLAVT) and 43–170 (FEQT…PIHR). Residues 45–78 (QTRRTAVERSRKTLEAREKEEEMNREKELRKQLE) are compositionally biased toward basic and acidic residues. Positions 99 to 112 (RDTSSSDSDHSSGS) are enriched in low complexity. The span at 148–165 (EEGEDDDDDDLEDEGEED) shows a compositional bias: acidic residues. 7 WD repeats span residues 181 to 220 (HGTKTVSALGLDPSGARLVTGGYDYDVKFWDFAGMDASFK), 228 to 269 (CECH…ECIK), 282 to 322 (GHTA…KQKS), 331 to 370 (GKKVIPTTCTYSRDGNLVAAACQNGSIQIWDRNLTVHPKF), 377 to 416 (APGTDTSCVAFSYDGNVLASRGGDDTLKLWDVRQFNKPLF), 422 to 467 (PTLF…RVYE), and 470 to 509 (ITDASVVRCLWHPKLNQIMVGTGNGLAKVYYDPNKSQRGA). Lys297 participates in a covalent cross-link: Glycyl lysine isopeptide (Lys-Gly) (interchain with G-Cter in SUMO2). An N6-acetyllysine modification is found at Lys453. A compositionally biased stretch (basic and acidic residues) spans 541-566 (REPRQRSTRKQLEKDRLDPLKSHKPE). The segment at 541–582 (REPRQRSTRKQLEKDRLDPLKSHKPEPPVAGPGRGGRVGTHG) is disordered. Residues 572–582 (PGRGGRVGTHG) are compositionally biased toward gly residues. Thr580 bears the Phosphothreonine mark. Residues Lys591 and Lys597 each participate in a glycyl lysine isopeptide (Lys-Gly) (interchain with G-Cter in SUMO2) cross-link. Phosphoserine occurs at positions 622 and 639. The interval 632 to 655 (TMFAQVESDDEESKNEPEWKKRKI) is disordered. Over residues 645 to 655 (KNEPEWKKRKI) the composition is skewed to basic and acidic residues.

It belongs to the WD repeat GAD-1 family.

This Rattus norvegicus (Rat) protein is WD repeat-containing protein 70 (Wdr70).